The primary structure comprises 294 residues: Small ribosomal subunit biogenesis GTPase RsgA (294 aa).

A CP-type G domain is found at 63–223; the sequence is KNELLRPPIA…VADTPGFSSL (161 aa). Residues 112–115 and 166–174 each bind GTP; these read SKID and GQSGVGKSS. Residues Cys247, Cys252, His254, and Cys260 each contribute to the Zn(2+) site.

This sequence belongs to the TRAFAC class YlqF/YawG GTPase family. RsgA subfamily. In terms of assembly, monomer. Associates with 30S ribosomal subunit, binds 16S rRNA. The cofactor is Zn(2+).

It is found in the cytoplasm. One of several proteins that assist in the late maturation steps of the functional core of the 30S ribosomal subunit. Helps release RbfA from mature subunits. May play a role in the assembly of ribosomal proteins into the subunit. Circularly permuted GTPase that catalyzes slow GTP hydrolysis, GTPase activity is stimulated by the 30S ribosomal subunit. The polypeptide is Small ribosomal subunit biogenesis GTPase RsgA (Halalkalibacterium halodurans (strain ATCC BAA-125 / DSM 18197 / FERM 7344 / JCM 9153 / C-125) (Bacillus halodurans)).